The primary structure comprises 247 residues: Adenosylcobinamide-GDP ribazoletransferase (247 aa).

The next 5 helical transmembrane spans lie at 34–54 (IITF…VFMV), 59–79 (CGVP…TGGF), 113–133 (GGLA…ELAL), 138–158 (ILAL…LLMY), and 194–214 (VLLP…AIFI).

Belongs to the CobS family. It depends on Mg(2+) as a cofactor.

It is found in the cell inner membrane. It catalyses the reaction alpha-ribazole + adenosylcob(III)inamide-GDP = adenosylcob(III)alamin + GMP + H(+). The catalysed reaction is alpha-ribazole 5'-phosphate + adenosylcob(III)inamide-GDP = adenosylcob(III)alamin 5'-phosphate + GMP + H(+). The protein operates within cofactor biosynthesis; adenosylcobalamin biosynthesis; adenosylcobalamin from cob(II)yrinate a,c-diamide: step 7/7. Joins adenosylcobinamide-GDP and alpha-ribazole to generate adenosylcobalamin (Ado-cobalamin). Also synthesizes adenosylcobalamin 5'-phosphate from adenosylcobinamide-GDP and alpha-ribazole 5'-phosphate. This Shigella boydii serotype 4 (strain Sb227) protein is Adenosylcobinamide-GDP ribazoletransferase.